The primary structure comprises 116 residues: UPF0342 protein LBA1592 (116 aa).

This sequence belongs to the UPF0342 family.

This Lactobacillus acidophilus (strain ATCC 700396 / NCK56 / N2 / NCFM) protein is UPF0342 protein LBA1592.